Here is a 364-residue protein sequence, read N- to C-terminus: UDP-N-acetylglucosamine--N-acetylmuramyl-(pentapeptide) pyrophosphoryl-undecaprenol N-acetylglucosamine transferase (364 aa).

Residues 15 to 17 (TGG), Asn-123, Arg-164, Ser-191, and Gln-286 each bind UDP-N-acetyl-alpha-D-glucosamine.

This sequence belongs to the glycosyltransferase 28 family. MurG subfamily.

Its subcellular location is the cell inner membrane. The enzyme catalyses di-trans,octa-cis-undecaprenyl diphospho-N-acetyl-alpha-D-muramoyl-L-alanyl-D-glutamyl-meso-2,6-diaminopimeloyl-D-alanyl-D-alanine + UDP-N-acetyl-alpha-D-glucosamine = di-trans,octa-cis-undecaprenyl diphospho-[N-acetyl-alpha-D-glucosaminyl-(1-&gt;4)]-N-acetyl-alpha-D-muramoyl-L-alanyl-D-glutamyl-meso-2,6-diaminopimeloyl-D-alanyl-D-alanine + UDP + H(+). It functions in the pathway cell wall biogenesis; peptidoglycan biosynthesis. Cell wall formation. Catalyzes the transfer of a GlcNAc subunit on undecaprenyl-pyrophosphoryl-MurNAc-pentapeptide (lipid intermediate I) to form undecaprenyl-pyrophosphoryl-MurNAc-(pentapeptide)GlcNAc (lipid intermediate II). In Prochlorococcus marinus subsp. pastoris (strain CCMP1986 / NIES-2087 / MED4), this protein is UDP-N-acetylglucosamine--N-acetylmuramyl-(pentapeptide) pyrophosphoryl-undecaprenol N-acetylglucosamine transferase.